The sequence spans 1158 residues: Serine/threonine/tyrosine-interacting-like protein 2 (1158 aa).

Disordered regions lie at residues M1 to N21, E280 to S303, E315 to K337, L360 to I392, G407 to S444, S492 to A527, K559 to S582, Q597 to K622, K873 to L915, and S940 to E1135. The segment covering E8–E19 has biased composition (acidic residues). The Tyrosine-protein phosphatase domain occupies N132 to E280. Positions S322 to K337 are enriched in polar residues. S377 carries the phosphoserine modification. T433 bears the Phosphothreonine mark. Positions S435–S444 are enriched in low complexity. Residues K500–E517 show a composition bias toward basic and acidic residues. Phosphoserine is present on S509. Residues V600–L619 show a composition bias toward basic and acidic residues. Over residues D877–D890 the composition is skewed to acidic residues. 2 stretches are compositionally biased toward polar residues: residues R897 to S914 and S952 to S966. The span at K974 to S983 shows a compositional bias: low complexity. A Phosphoserine modification is found at S985. Polar residues predominate over residues T990–N999. The span at S1000–T1012 shows a compositional bias: low complexity. S1036 bears the Phosphoserine mark. 3 stretches are compositionally biased toward basic and acidic residues: residues R1044 to E1056, R1064 to F1079, and R1094 to R1111. Positions R1126 to E1135 are enriched in acidic residues.

It belongs to the protein-tyrosine phosphatase family. Non-receptor class dual specificity subfamily.

It is found in the cytoplasm. Its subcellular location is the myofibril. The protein localises to the sarcomere. May be required for myofiber maturation. In Homo sapiens (Human), this protein is Serine/threonine/tyrosine-interacting-like protein 2.